Here is a 147-residue protein sequence, read N- to C-terminus: uncharacterized protein (147 aa).

This is an uncharacterized protein from Escherichia coli (strain K12).